The following is a 154-amino-acid chain: Endoribonuclease YbeY (154 aa).

3 residues coordinate Zn(2+): His113, His117, and His123.

It belongs to the endoribonuclease YbeY family. Requires Zn(2+) as cofactor.

It localises to the cytoplasm. In terms of biological role, single strand-specific metallo-endoribonuclease involved in late-stage 70S ribosome quality control and in maturation of the 3' terminus of the 16S rRNA. In Aeromonas salmonicida (strain A449), this protein is Endoribonuclease YbeY.